A 954-amino-acid chain; its full sequence is Glycine dehydrogenase (decarboxylating) (954 aa).

Position 704 is an N6-(pyridoxal phosphate)lysine (K704).

Belongs to the GcvP family. In terms of assembly, the glycine cleavage system is composed of four proteins: P, T, L and H. Requires pyridoxal 5'-phosphate as cofactor.

The catalysed reaction is N(6)-[(R)-lipoyl]-L-lysyl-[glycine-cleavage complex H protein] + glycine + H(+) = N(6)-[(R)-S(8)-aminomethyldihydrolipoyl]-L-lysyl-[glycine-cleavage complex H protein] + CO2. The glycine cleavage system catalyzes the degradation of glycine. The P protein binds the alpha-amino group of glycine through its pyridoxal phosphate cofactor; CO(2) is released and the remaining methylamine moiety is then transferred to the lipoamide cofactor of the H protein. In Agrobacterium fabrum (strain C58 / ATCC 33970) (Agrobacterium tumefaciens (strain C58)), this protein is Glycine dehydrogenase (decarboxylating).